The sequence spans 356 residues: Trans-enoyl reductase pgmF (356 aa).

NADP(+)-binding positions include 57–60 (VDFK), 175–178 (SGGC), 198–201 (STPN), Tyr216, 261–262 (VG), and 342–343 (AK).

This sequence belongs to the zinc-containing alcohol dehydrogenase family.

In terms of biological role, FAD-linked oxidoreductase; part of the gene cluster that mediates the biosynthesis of pleosporalin A, ascomycone A, as well as a third cryptic naphthoquinone derived pigment, all responsible for the coloration of conidia. The pathway begins with the biosynthesis of the cyclized heptaketide 3-acetonyl-1,6,8-trihydroxy-2-naphthaldehyde by the NR-PKS pgmA. The C-6 hydroxyl group is further methylated by the O-methyltransferase pgmB to yield fusarubinaldehyde which is in turn oxidized by the cytochrome P450 monooxygenase pgmC at C-9. The C-1 hydroxyl group is then methylated spontaneously. Although pgmE, pgmD and pgmH are essential for the production of pleosporalin A, it is not the case for the 2 other final products and it remains difficult to assign a specific function to each enzyme. PgmF and pgmG seem not to be involved in pigment biosynthesis although they were regulated by the cluster-specific transcription factor pgmR. The chain is Trans-enoyl reductase pgmF from Aspergillus terreus.